A 551-amino-acid polypeptide reads, in one-letter code: uncharacterized protein (551 aa).

Residues Met1–Asn11 show a composition bias toward polar residues. 2 disordered regions span residues Met1 to Glu22 and Cys523 to His551. Positions Glu12–Glu22 are enriched in basic and acidic residues. The segment covering Gln537–His551 has biased composition (low complexity).

To Synechocystis PCC 6803 sll0335 and to M.tuberculosis Rv2567.

This is an uncharacterized protein from Mycobacterium bovis (strain ATCC BAA-935 / AF2122/97).